The sequence spans 459 residues: Zinc finger chaperone zpr1 (459 aa).

C4-type zinc fingers lie at residues 38-70 (CMEC…CPHC) and 259-291 (CPSC…CDRC).

This sequence belongs to the ZPR1 family.

The protein resides in the cytoplasm. It is found in the nucleus. Its function is as follows. Acts as a protein folding chaperone for elongation factor 1-alpha. This chain is Zinc finger chaperone zpr1, found in Schizosaccharomyces pombe (strain 972 / ATCC 24843) (Fission yeast).